Reading from the N-terminus, the 294-residue chain is Bifunctional protein FolD (294 aa).

NADP(+)-binding positions include 166–168 (GRS), S191, and I232.

This sequence belongs to the tetrahydrofolate dehydrogenase/cyclohydrolase family. Homodimer.

The catalysed reaction is (6R)-5,10-methylene-5,6,7,8-tetrahydrofolate + NADP(+) = (6R)-5,10-methenyltetrahydrofolate + NADPH. It carries out the reaction (6R)-5,10-methenyltetrahydrofolate + H2O = (6R)-10-formyltetrahydrofolate + H(+). The protein operates within one-carbon metabolism; tetrahydrofolate interconversion. Functionally, catalyzes the oxidation of 5,10-methylenetetrahydrofolate to 5,10-methenyltetrahydrofolate and then the hydrolysis of 5,10-methenyltetrahydrofolate to 10-formyltetrahydrofolate. The polypeptide is Bifunctional protein FolD (Nitrobacter winogradskyi (strain ATCC 25391 / DSM 10237 / CIP 104748 / NCIMB 11846 / Nb-255)).